Here is a 333-residue protein sequence, read N- to C-terminus: Phosphate acyltransferase (333 aa).

The protein belongs to the PlsX family. As to quaternary structure, homodimer. Probably interacts with PlsY.

Its subcellular location is the cytoplasm. It carries out the reaction a fatty acyl-[ACP] + phosphate = an acyl phosphate + holo-[ACP]. Its pathway is lipid metabolism; phospholipid metabolism. Its function is as follows. Catalyzes the reversible formation of acyl-phosphate (acyl-PO(4)) from acyl-[acyl-carrier-protein] (acyl-ACP). This enzyme utilizes acyl-ACP as fatty acyl donor, but not acyl-CoA. This is Phosphate acyltransferase from Clostridium beijerinckii (strain ATCC 51743 / NCIMB 8052) (Clostridium acetobutylicum).